Here is a 4076-residue protein sequence, read N- to C-terminus: E3 ubiquitin-protein ligase TOM1-like (4076 aa).

Residues 225–237 (SSAAPAVSAGSTA) show a composition bias toward low complexity. 17 disordered regions span residues 225-256 (SSAAPAVSAGSTAKAKDKEKEKEKATGPKNVA), 288-360 (YPDT…RDGP), 748-819 (IPAE…ILPS), 921-970 (LEAP…NKPA), 1083-1103 (SPVQDEEPASEKRTPDVSSGT), 1571-1646 (MALD…ITRE), 1988-2041 (PADA…KRPI), 2067-2110 (NVPA…KLAK), 2275-2295 (EGDKDSRPNNPRGTDPSIGRS), 2356-2551 (SGTA…ELDY), 2581-2634 (GDDL…LLAP), 2782-2817 (IPIPPPHSRESRPTEARRDTYQEPHQAVQFSPESTH), 2858-2955 (EKAR…QAED), 3037-3066 (EQHEQRRRERQNAAGGQDLGPADMDPASIL), 3105-3132 (RQLHAQQGGQAASRSRDAQRPTEAGAGT), 3216-3241 (KQLKEKDAKTPHPLKRSLTGGTNNNG), and 3353-3444 (EEQA…QLTP). The segment covering 238-250 (KAKDKEKEKEKAT) has biased composition (basic and acidic residues). Low complexity predominate over residues 311 to 320 (TTSSPAAPTP). Over residues 322 to 343 (RRSSTMNVSQSSRTQRVGSSEE) the composition is skewed to polar residues. A compositionally biased stretch (acidic residues) spans 767-778 (EGNDADDDSEDD). The span at 940–950 (VKGKGKEKATD) shows a compositional bias: basic and acidic residues. Residues 959-969 (ASSSSSGNNKP) are compositionally biased toward polar residues. Residues 1606–1620 (PGTSRETNVGASTTA) are compositionally biased toward polar residues. The segment covering 1621-1632 (PQQLPVLPSQQP) has biased composition (low complexity). The segment covering 1633–1642 (ATESQSNTPR) has biased composition (polar residues). Positions 2021–2041 (VTDKDMHDAPKNPAQDLKRPI) are enriched in basic and acidic residues. A compositionally biased stretch (polar residues) spans 2086-2096 (NEATPSPSGDE). The span at 2099–2110 (SESKEKEKKLAK) shows a compositional bias: basic and acidic residues. Composition is skewed to acidic residues over residues 2378–2387 (DLTDDREETP) and 2405–2450 (EFSD…DLGE). Over residues 2460–2469 (QPGVVEVLMG) the composition is skewed to low complexity. 2 stretches are compositionally biased toward acidic residues: residues 2470–2516 (ENDD…DLED) and 2523–2551 (EEGNAIDDDGASWDDGTDEDEEDEEELDY). Residues 2587–2597 (EPIRDFDGHYI) are compositionally biased toward basic and acidic residues. Residues 2598–2622 (DDDEDGEEDDDEDEGEDDMDDDMYF) are compositionally biased toward acidic residues. Basic and acidic residues-rich tracts occupy residues 2788-2803 (HSRESRPTEARRDTYQ) and 2858-2912 (EKAR…ERAE). The stretch at 2851-2929 (AIQAEKEEKA…QAAADQEANA (79 aa)) forms a coiled coil. Positions 2913 to 2927 (AAAQAAAQAAADQEA) are enriched in low complexity. Positions 3037 to 3047 (EQHEQRRRERQ) are enriched in basic and acidic residues. A compositionally biased stretch (polar residues) spans 3108-3117 (HAQQGGQAAS). Residues 3341 to 3375 (PLQAIERRRKEAEEQAKKKKEAEEKAATEREAANA) are a coiled coil. Residues 3353–3372 (EEQAKKKKEAEEKAATEREA) show a composition bias toward basic and acidic residues. Positions 3373–3414 (ANAPEEQASTSTEQTPAQQEATQQPSESTPAAASGQQPAQQD) are enriched in low complexity. The span at 3415–3439 (QENKELEAPKEKADEKDVQSDEKKI) shows a compositional bias: basic and acidic residues. The HECT domain occupies 3740-4076 (KADELKFGKL…TAGSDYFGFA (337 aa)). Cysteine 4043 acts as the Glycyl thioester intermediate in catalysis.

It belongs to the UPL family. TOM1/PTR1 subfamily.

Its subcellular location is the nucleus. The catalysed reaction is S-ubiquitinyl-[E2 ubiquitin-conjugating enzyme]-L-cysteine + [acceptor protein]-L-lysine = [E2 ubiquitin-conjugating enzyme]-L-cysteine + N(6)-ubiquitinyl-[acceptor protein]-L-lysine.. It participates in protein modification; protein ubiquitination. Functionally, probable ubiquitin ligase protein, which may be involved in mRNA export. E3 ubiquitin ligase proteins mediate ubiquitination and subsequent proteasomal degradation of target proteins. Participates in mRNA export from the nucleus by regulating the transport of hnRNP proteins. The protein is E3 ubiquitin-protein ligase TOM1-like of Neurospora crassa (strain ATCC 24698 / 74-OR23-1A / CBS 708.71 / DSM 1257 / FGSC 987).